Here is a 444-residue protein sequence, read N- to C-terminus: Alpha-1,3-mannosyl-glycoprotein 2-beta-N-acetylglucosaminyltransferase (444 aa).

The Cytoplasmic portion of the chain corresponds to 1–6; sequence MARISC. The chain crosses the membrane as a helical; Signal-anchor for type II membrane protein span at residues 7–24; the sequence is DLRFLLIPAAFMFIYIQM. Residues 25 to 444 are Lumenal-facing; that stretch reads RLFQTQSQYA…SVMQLGIRNS (420 aa). Residues 61 to 92 are a coiled coil; that stretch reads KQSRIVALEDMKNRQDEELVQLKDLIQTFEKK. Substrate is bound by residues Arg-115, Asp-144, His-188, and Asp-210. Position 211 (Asp-211) interacts with Mn(2+). The active-site Proton acceptor is the Asp-287. Ser-318 is a substrate binding site. Residue Asn-351 is glycosylated (N-linked (GlcNAc...) asparagine).

Belongs to the glycosyltransferase 13 family. Mn(2+) is required as a cofactor. In terms of processing, glycosylated. In terms of tissue distribution, expressed in roots, stems, leaves and flowers.

The protein localises to the golgi apparatus membrane. The catalysed reaction is N(4)-(alpha-D-Man-(1-&gt;3)-[alpha-D-Man-(1-&gt;3)-[alpha-D-Man-(1-&gt;6)]-alpha-D-Man-(1-&gt;6)]-beta-D-Man-(1-&gt;4)-beta-D-GlcNAc-(1-&gt;4)-beta-D-GlcNAc)-L-asparaginyl-[protein] (N-glucan mannose isomer 5A1,2) + UDP-N-acetyl-alpha-D-glucosamine = N(4)-{beta-D-GlcNAc-(1-&gt;2)-alpha-D-Man-(1-&gt;3)-[alpha-D-Man-(1-&gt;3)-[alpha-D-Man-(1-&gt;6)]-alpha-D-Man-(1-&gt;6)]-beta-D-Man-(1-&gt;4)-beta-D-GlcNAc-(1-&gt;4)-beta-D-GlcNAc}-L-asparaginyl-[protein] + UDP + H(+). Its pathway is protein modification; protein glycosylation. Its function is as follows. Initiates complex N-linked carbohydrate formation. Essential for the conversion of high-mannose to hybrid and complex N-glycans. Required for normal root growth and morphology. In Arabidopsis thaliana (Mouse-ear cress), this protein is Alpha-1,3-mannosyl-glycoprotein 2-beta-N-acetylglucosaminyltransferase.